We begin with the raw amino-acid sequence, 70 residues long: Conotoxin ArMKLT2-0111 (70 aa).

Residues Met1–Gly22 form the signal peptide. The propeptide occupies Glu23–Arg40. Gln41 carries the pyrrolidone carboxylic acid modification. Intrachain disulfides connect Cys42–Cys56, Cys49–Cys60, and Cys55–Cys67.

It belongs to the conotoxin O1 superfamily. As to expression, expressed by the venom duct.

It is found in the secreted. This Conus arenatus (Sand-dusted cone) protein is Conotoxin ArMKLT2-0111.